Consider the following 392-residue polypeptide: Small ribosomal subunit protein bS1 (392 aa).

4 S1 motif domains span residues Gly-16–Arg-90, Asp-108–Lys-173, Gly-194–Lys-262, and Asp-279–Lys-348.

Belongs to the bacterial ribosomal protein bS1 family.

Binds mRNA; thus facilitating recognition of the initiation point. It is needed to translate mRNA with a short Shine-Dalgarno (SD) purine-rich sequence. The sequence is that of Small ribosomal subunit protein bS1 (rpsA) from Staphylococcus haemolyticus (strain JCSC1435).